We begin with the raw amino-acid sequence, 126 residues long: Aspartate 1-decarboxylase 1 (126 aa).

Serine 25 (schiff-base intermediate with substrate; via pyruvic acid) is an active-site residue. At serine 25 the chain carries Pyruvic acid (Ser). Threonine 57 contributes to the substrate binding site. Catalysis depends on tyrosine 58, which acts as the Proton donor. 73-75 provides a ligand contact to substrate; it reads GSA.

The protein belongs to the PanD family. Heterooctamer of four alpha and four beta subunits. Pyruvate is required as a cofactor. Post-translationally, is synthesized initially as an inactive proenzyme, which is activated by self-cleavage at a specific serine bond to produce a beta-subunit with a hydroxyl group at its C-terminus and an alpha-subunit with a pyruvoyl group at its N-terminus.

It is found in the cytoplasm. It carries out the reaction L-aspartate + H(+) = beta-alanine + CO2. Its pathway is cofactor biosynthesis; (R)-pantothenate biosynthesis; beta-alanine from L-aspartate: step 1/1. Functionally, catalyzes the pyruvoyl-dependent decarboxylation of aspartate to produce beta-alanine. This Polaromonas sp. (strain JS666 / ATCC BAA-500) protein is Aspartate 1-decarboxylase 1.